Here is a 680-residue protein sequence, read N- to C-terminus: MAPLSLNFKDDKKYKGLTTVWLLSALGNSIVKESNNYYSNKSNSTGNISSSTVKKKDIVNISIPKTCDEIQNFENDFSLRYISNLLYGVTICYNKKTEYVLNDLNHLLVQLQKNDVYAFKAKNKSTRINGLNSNNSIIGNKNNNYTWEECVFFDDDPLYDITKVPALEFLNTTLQDNVSFIEEAKSIRRQDYINELSNSNRFELHGDMTNSDAQSNLGSNVRNSFPLDEIPVDVDFNLDLDDIVSHQGTPLGSHSSSQKDGNDFKFNYQGDELVLNFENDNENNSNGGEDTSVENEGPVANLKDYELGLEAQASEEENDLQQKLNTRMQRGHRADVGGQFSKVQFDAKTSYPNEVLKFNHGNYSHLMEKNRIRKLTGQNFLTSNISSLVRSCGEEEFFSTNWLSIFNDFSNIKTSEWDLYPQGFSSVERGRKRAHSLVSTQSSSSTRSHEYGRKSFRNNKNDNYSSDMENDNLLLNLEQINEDLEDGHYIEENSQGNILDFNLNLPPSSFGRSHTRNSTRSSGFNEDIVGALRRRVGPSEQNFAEEDDSSNSCFSDGSQQNLQQDKTNFQDVILDYQTKKFYDYIKERSIVVGRTTRSNPPFKRKMLLVDIIPSRMGEAQTGANFDDVERGVSRQIAASAFLSLLNLATKGMVKLNEYPVADAVTKDLKLRREDEIIVYA.

Low complexity-rich tracts occupy residues 278–290 (ENDNENNSNGGED) and 436–446 (SLVSTQSSSST). Disordered regions lie at residues 278-297 (ENDNENNSNGGEDTSVENEG), 431-467 (RKRAHSLVSTQSSSSTRSHEYGRKSFRNNKNDNYSSD), and 540-560 (EQNFAEEDDSSNSCFSDGSQQ). Over residues 550 to 560 (SNSCFSDGSQQ) the composition is skewed to polar residues.

Belongs to the rad21 family. Post-translationally, proteolytically cleaved by ESP1. Phosphorylated by CDC5. CDC5 phosphorylation is necessary for cleavage by ESP1 and subsequent removal from chromosome arms.

It is found in the nucleus. The protein localises to the chromosome. It localises to the centromere. In terms of biological role, replaces the SCC1 mitosis-specific cohesin to ensure sister chromatid cohesion during meiosis. Is cleaved by ESP1 shortly before the first meiotic division, and dissociates from chromatin, allowing sister chromatids to segregate. Is protected from cleavage by SPO13. Promotes localization of the LINC complex subunit MPS3 on nuclear envelope in mitotic cells. The sequence is that of Meiotic recombination protein REC8 from Saccharomyces cerevisiae (strain ATCC 204508 / S288c) (Baker's yeast).